The following is a 274-amino-acid chain: Rhamnulose-1-phosphate aldolase (274 aa).

E117 is an active-site residue. Residues H141, H143, and H212 each coordinate Zn(2+).

Belongs to the aldolase class II family. RhaD subfamily. As to quaternary structure, homotetramer. Zn(2+) is required as a cofactor.

Its subcellular location is the cytoplasm. It carries out the reaction L-rhamnulose 1-phosphate = (S)-lactaldehyde + dihydroxyacetone phosphate. Its pathway is carbohydrate degradation; L-rhamnose degradation; glycerone phosphate from L-rhamnose: step 3/3. Catalyzes the reversible cleavage of L-rhamnulose-1-phosphate to dihydroxyacetone phosphate (DHAP) and L-lactaldehyde. This is Rhamnulose-1-phosphate aldolase from Pectobacterium atrosepticum (strain SCRI 1043 / ATCC BAA-672) (Erwinia carotovora subsp. atroseptica).